The primary structure comprises 245 residues: Ribosomal RNA small subunit methyltransferase G (245 aa).

Residues Gly-80, Phe-85, Asp-103–Thr-105, Ala-131–Glu-132, and Arg-150 contribute to the S-adenosyl-L-methionine site.

The protein belongs to the methyltransferase superfamily. RNA methyltransferase RsmG family.

Its subcellular location is the cytoplasm. Its function is as follows. Specifically methylates the N7 position of a guanine in 16S rRNA. The protein is Ribosomal RNA small subunit methyltransferase G of Deinococcus geothermalis (strain DSM 11300 / CIP 105573 / AG-3a).